Here is a 276-residue protein sequence, read N- to C-terminus: MSARWTTAVLDPQITGGLAVARSPDGFLVDANGALFPRDWLKRQDLDVLCEHGIGHFDGQPVFLLELRSATDVPGCSWRGLRAFMLEGDFDTYKVLGYAAQIGTWAREHRFCGSCGQAMTQIRWERAMYCQPCDLRSYPRISPSMIVLVTRGDEILLARSPRFVTGVYSTLAGFAEPGESAEDCLVREVREEVAVEVQNIQYVGSQCWPFPHSMMLGFHAEYAGGDIVMQPDEIEDAQWFSVHDLPPLPAGRSIARYLIDLYVARRLGLPEPVLPR.

Substrate is bound at residue Arg-82. Zn(2+) contacts are provided by Cys-112 and Cys-115. Glu-125 lines the substrate pocket. Residues Cys-130 and Cys-133 each contribute to the Zn(2+) site. Residue Tyr-138 coordinates substrate. One can recognise a Nudix hydrolase domain in the interval 139–262 (PRISPSMIVL…SIARYLIDLY (124 aa)). A divalent metal cation contacts are provided by Ala-172, Glu-188, and Glu-192. The Nudix box motif lies at 173–194 (GFAEPGESAEDCLVREVREEVA). 206–213 (QCWPFPHS) contacts substrate. An a divalent metal cation-binding site is contributed by Glu-233. Ala-255 serves as a coordination point for substrate.

It belongs to the Nudix hydrolase family. NudC subfamily. Homodimer. The cofactor is Mg(2+). Mn(2+) is required as a cofactor. It depends on Zn(2+) as a cofactor.

It carries out the reaction a 5'-end NAD(+)-phospho-ribonucleoside in mRNA + H2O = a 5'-end phospho-adenosine-phospho-ribonucleoside in mRNA + beta-nicotinamide D-ribonucleotide + 2 H(+). It catalyses the reaction NAD(+) + H2O = beta-nicotinamide D-ribonucleotide + AMP + 2 H(+). The enzyme catalyses NADH + H2O = reduced beta-nicotinamide D-ribonucleotide + AMP + 2 H(+). MRNA decapping enzyme that specifically removes the nicotinamide adenine dinucleotide (NAD) cap from a subset of mRNAs by hydrolyzing the diphosphate linkage to produce nicotinamide mononucleotide (NMN) and 5' monophosphate mRNA. The NAD-cap is present at the 5'-end of some mRNAs and stabilizes RNA against 5'-processing. Has preference for mRNAs with a 5'-end purine. Catalyzes the hydrolysis of a broad range of dinucleotide pyrophosphates. The chain is NAD-capped RNA hydrolase NudC from Pseudomonas putida (strain GB-1).